Reading from the N-terminus, the 352-residue chain is 4-hydroxy-2-oxovalerate aldolase 5 (352 aa).

A Pyruvate carboxyltransferase domain is found at 9 to 261 (IRVTDSSLRD…RTGIDTLKII (253 aa)). 17–18 (RD) contacts substrate. Position 18 (D18) interacts with Mn(2+). The active-site Proton acceptor is the H21. 2 residues coordinate substrate: S171 and H200. Mn(2+)-binding residues include H200 and H202. Y291 is a substrate binding site.

It belongs to the 4-hydroxy-2-oxovalerate aldolase family.

It catalyses the reaction (S)-4-hydroxy-2-oxopentanoate = acetaldehyde + pyruvate. This chain is 4-hydroxy-2-oxovalerate aldolase 5, found in Rhodococcus opacus (strain B4).